The sequence spans 391 residues: Probable methanogen homoaconitase large subunit (391 aa).

Cys-275, Cys-333, and Cys-336 together coordinate [4Fe-4S] cluster.

Belongs to the aconitase/IPM isomerase family. LeuC type 2 subfamily. Heterotetramer of 2 HacA and 2 HacB proteins.

It catalyses the reaction (2R)-homocitrate = (2R,3S)-homoisocitrate. It carries out the reaction (2R)-homocitrate = cis-homoaconitate + H2O. The catalysed reaction is (2R,3S)-homoisocitrate = cis-homoaconitate + H2O. The enzyme catalyses cis-(homo)2aconitate + H2O = (2R,3S)-iso(homo)2citrate. It catalyses the reaction cis-(homo)3aconitate + H2O = (2R,3S)-iso(homo)3citrate. It functions in the pathway organic acid metabolism; 2-oxosuberate biosynthesis. Its function is as follows. Component of a hydro-lyase with broad substrate specificity for cis-unsaturated tricarboxylic acids. Catalyzes both the reversible dehydration of (R)-homocitrate ((R)-2-hydroxybutane-1,2,4-tricarboxylate) to produce cis-homoaconitate ((Z)-but-1-ene-1,2,4-tricarboxylate), and its hydration to homoisocitrate ((1R,2S)-1-hydroxybutane-1,2,4-tricarboxylate). Is also able to hydrate the analogous longer chain substrates cis-homo(2)-aconitate, cis-homo(3)-aconitate. These reactions are part of the biosynthesis pathway of coenzyme B. The chain is Probable methanogen homoaconitase large subunit (hacA) from Methanosarcina mazei (strain ATCC BAA-159 / DSM 3647 / Goe1 / Go1 / JCM 11833 / OCM 88) (Methanosarcina frisia).